The chain runs to 770 residues: Amyloid-beta precursor protein (770 aa).

Residues 1–17 (MLPGLALLLLAAWTARA) form the signal peptide. Over 18-701 (LEVPTDGNAG…AEDVGSNKGA (684 aa)) the chain is Extracellular. The GFLD subdomain stretch occupies residues 28–123 (LLAEPQIAMF…PYRCLVGEFV (96 aa)). The E1 domain maps to 28 to 189 (LLAEPQIAMF…RGVEFVCCPL (162 aa)). Intrachain disulfides connect C38–C62, C73–C117, C98–C105, C133–C187, C144–C174, and C158–C186. Heparin is bound at residue 96 to 110 (NWCKRGRKQCKTHPH). The segment at 131 to 189 (DKCKFLHQERMDVCETHLHWHTVAKETCSEKSTNLHDYGMLLPCGIDKFRGVEFVCCPL) is cuBD subdomain. Residues H147, H151, and Y168 each coordinate Cu(2+). Positions 181-188 (GVEFVCCP) are zinc-binding. Zn(2+) contacts are provided by E183, C186, and C187. The segment covering 194–207 (DNVDSADAEEDDSD) has biased composition (acidic residues). The tract at residues 194 to 284 (DNVDSADAEE…TTTTTTESVE (91 aa)) is disordered. S198 carries the post-translational modification Phosphoserine; by CK2. A Phosphoserine; by CK1 modification is found at S206. Residues Y217 and Y262 each carry the sulfotyrosine modification. Acidic residues predominate over residues 228–264 (VAEEEEVAEVEEEEADDDEDDEDGDEVEEEAEEPYEE). A compositionally biased stretch (low complexity) spans 268-281 (RTTSIATTTTTTTE). 3 disulfides stabilise this stretch: C291-C341, C300-C324, and C316-C337. One can recognise a BPTI/Kunitz inhibitor domain in the interval 291 to 341 (CSEQAETGPCRAMISRWYFDVTEGKCAPFFYGGCGGNRNNFDTEEYCMAVC). At Y336 the chain carries Sulfotyrosine. The OX-2 motif lies at 344–365 (VMSQSLRKTTREPLTRDPVKLP). The 192-residue stretch at 374-565 (AVDKYLETPG…EEIQDEVDEL (192 aa)) folds into the E2 domain. Positions 391–423 (FQKAKERLEAKHRERMSQVMREWEEAERQAKNL) are heparin-binding. S441 carries the post-translational modification Phosphoserine. Residues 491–522 (FNMLKKYVRAEQKDRQHTLKHFEHVRMVDPKK) are heparin-binding. Position 497 is a phosphotyrosine (Y497). Residues 523–540 (AAQIRSQVMTHLRVIYER) form a collagen-binding region. N-linked (GlcNAc...) asparagine glycosylation is found at N542 and N571. H677, Y681, H684, and H685 together coordinate Cu(2+). 4 residues coordinate Zn(2+): H677, Y681, H684, and H685. The segment at 695–722 (VGSNKGAIIGLMVGGVVIATVIVITLVM) is interaction with PSEN1. The helical transmembrane segment at 702 to 722 (IIGLMVGGVVIATVIVITLVM) threads the bilayer. Residues 723-770 (LKKKQYTSIHHGVVEVDAAVTPEERHLSKMQQNGYENPTYKFFEQMQN) are Cytoplasmic-facing. A Basolateral sorting signal motif is present at residues 724–734 (KKKQYTSIHHG). The residue at position 729 (T729) is a Phosphothreonine. S730 is modified (phosphoserine; by APP-kinase I). An interaction with G(o)-alpha region spans residues 732 to 751 (HHGVVEVDAAVTPEERHLSK). T743 is modified (phosphothreonine; by CDK5 and MAPK10). The tract at residues 756-770 (GYENPTYKFFEQMQN) is required for the interaction with KIF5B and for anterograde transport in axons. Residue Y757 is modified to Phosphotyrosine; by ABL1. A YENPXY motif; contains endocytosis signal motif is present at residues 757 to 762 (YENPTY). A Glycyl lysine isopeptide (Lys-Gly) (interchain with G-Cter in ubiquitin) cross-link involves residue K763.

Belongs to the APP family. Binds, via its C-terminus, to the PID domain of several cytoplasmic proteins, including APBB family members, the APBA family, MAPK8IP1, SHC1 and NUMB and DAB1. Binding to DAB1 inhibits its serine phosphorylation. Interacts (via NPXY motif) with DAB2 (via PID domain); the interaction is impaired by tyrosine phosphorylation of the NPXY motif. Also interacts with GPCR-like protein BPP, APPBP1, IB1, KNS2 (via its TPR domains), APPBP2 (via BaSS) and DDB1. In vitro, it binds MAPT via the MT-binding domains. Associates with microtubules in the presence of ATP and in a kinesin-dependent manner. Interacts, through a C-terminal domain, with GNAO1. Amyloid-beta protein 42 binds CHRNA7 in hippocampal neurons. Amyloid-beta associates with HADH2. Interacts with CPEB1, ANKS1B and AGER. Interacts with ITM2B. Interacts with ITM2C. Interacts with IDE. Can form homodimers; dimerization is enhanced in the presence of Cu(2+) ions. Can form homodimers; this is promoted by heparin binding. Amyloid-beta protein 40 interacts with S100A9. CTF-alpha product of APP interacts with GSAP. Isoform APP695 interacts with SORL1 (via N-terminal ectodomain); this interaction retains APP in the trans-Golgi network and reduces processing into soluble APP-alpha and amyloid-beta peptides. Isoform APP770 interacts with SORL1. The C99 fragment also interacts with SORL1. Interacts with PLD3. Interacts with VDAC1. Interacts with NSG1; could regulate APP processing. Amyloid-beta protein 42 interacts with FPR2. Interacts (via transmembrane region) with PSEN1; the interaction is direct. Interacts with LRRK2. Interacts (via cytoplasmic domain) with KIF5B. Interacts (via C-terminus) with APBB2/FE65L1 (via C-terminus). Interacts (via intracellular domain) with APBB3. Post-translationally, proteolytically processed under normal cellular conditions. Cleavage either by alpha-secretase, beta-secretase or theta-secretase leads to generation and extracellular release of soluble APP peptides, S-APP-alpha and S-APP-beta, and the retention of corresponding membrane-anchored C-terminal fragments, C80, C83 and C99. Subsequent processing of C80 and C83 by gamma-secretase yields P3 peptides. This is the major secretory pathway and is non-amyloidogenic. Alternatively, presenilin/nicastrin-mediated gamma-secretase processing of C99 releases the amyloid-beta proteins, amyloid-beta protein 40 and amyloid-beta protein 42, major components of amyloid plaques, and the cytotoxic C-terminal fragments, gamma-CTF(50), gamma-CTF(57) and gamma-CTF(59). PSEN1 cleavage is more efficient with C83 than with C99 as substrate (in vitro). Amyloid-beta protein 40 and Amyloid-beta protein 42 are cleaved by ACE. Many other minor amyloid-beta peptides, amyloid-beta 1-X peptides, are found in cerebral spinal fluid (CSF) including the amyloid-beta X-15 peptides, produced from the cleavage by alpha-secretase. Proteolytically cleaved by caspases during neuronal apoptosis. Cleavage at Asp-739 by either caspase-3, -8 or -9 results in the production of the neurotoxic C31 peptide and the increased production of amyloid-beta peptides. In terms of processing, N- and O-glycosylated. Post-translationally, phosphorylation in the C-terminal on tyrosine, threonine and serine residues is neuron-specific. Phosphorylation can affect APP processing, neuronal differentiation and interaction with other proteins. Phosphorylated on Thr-743 in neuronal cells by Cdc5 kinase and Mapk10, in dividing cells by Cdc2 kinase in a cell-cycle dependent manner with maximal levels at the G2/M phase and, in vitro, by GSK-3-beta. The Thr-743 phosphorylated form causes a conformational change which reduces binding of Fe65 family members. In dopaminergic (DA) neurons, phosphorylation on Thr-743 by LRKK2 promotes the production and the nuclear translocation of the APP intracellular domain (AICD) which induces DA neuron apoptosis. Phosphorylation on Tyr-757 is required for SHC binding. Phosphorylated in the extracellular domain by casein kinases on both soluble and membrane-bound APP. This phosphorylation is inhibited by heparin. Trophic-factor deprivation triggers the cleavage of surface APP by beta-secretase to release sAPP-beta which is further cleaved to release an N-terminal fragment of APP (N-APP). In terms of processing, amyloid-beta peptides are degraded by IDE. Post-translationally, sulfated on tyrosine residues.

It localises to the cell membrane. It is found in the membrane. The protein localises to the perikaryon. The protein resides in the cell projection. Its subcellular location is the growth cone. It localises to the clathrin-coated pit. It is found in the early endosome. The protein localises to the cytoplasmic vesicle. The protein resides in the endoplasmic reticulum. Its subcellular location is the golgi apparatus. It localises to the secreted. It is found in the cell surface. The protein localises to the nucleus. The protein resides in the cytoplasm. Functionally, functions as a cell surface receptor and performs physiological functions on the surface of neurons relevant to neurite growth, neuronal adhesion and axonogenesis. Interaction between APP molecules on neighboring cells promotes synaptogenesis. Involved in cell mobility and transcription regulation through protein-protein interactions. Can promote transcription activation through binding to APBB1-KAT5 and inhibit Notch signaling through interaction with Numb. Couples to apoptosis-inducing pathways such as those mediated by G(o) and JIP. Inhibits G(o)-alpha ATPase activity. Acts as a kinesin I membrane receptor, mediating the axonal transport of beta-secretase and presenilin 1. By acting as a kinesin I membrane receptor, plays a role in axonal anterograde transport of cargo towards synapses in axons. May be involved in copper homeostasis/oxidative stress through copper ion reduction. In vitro, copper-metallated APP induces neuronal death directly or is potentiated through Cu(2+)-mediated low-density lipoprotein oxidation. Can regulate neurite outgrowth through binding to components of the extracellular matrix such as heparin and collagen I and IV. Induces a AGER-dependent pathway that involves activation of p38 MAPK, resulting in internalization of amyloid-beta peptide and mitochondrial dysfunction in cultured cortical neurons. Provides Cu(2+) ions for GPC1 which are required for release of nitric oxide (NO) and subsequent degradation of the heparan sulfate chains on GPC1. In terms of biological role, amyloid-beta peptides are lipophilic metal chelators with metal-reducing activity. Binds transient metals such as copper, zinc and iron. Its function is as follows. The gamma-CTF peptides as well as the caspase-cleaved peptides, including C31, are potent enhancers of neuronal apoptosis. This is Amyloid-beta precursor protein from Macaca fascicularis (Crab-eating macaque).